The chain runs to 682 residues: 1,4-alpha-glucan-branching enzyme (682 aa).

Positions 88 and 124 each coordinate (1,4-alpha-D-glucosyl)n. D342 functions as the Nucleophile in the catalytic mechanism. E397 serves as the catalytic Proton donor.

Belongs to the glycosyl hydrolase 13 family. GlgB subfamily.

It is found in the cytoplasm. It carries out the reaction Transfers a segment of a (1-&gt;4)-alpha-D-glucan chain to a primary hydroxy group in a similar glucan chain.. It participates in glycan biosynthesis; glycogen biosynthesis. Glycogen-branching enzyme participates in the glycogen biosynthetic process along with glycogenin and glycogen synthase. Generates alpha-1,6-glucosidic branches from alpha-1,4-linked glucose chains, to increase solubility of the glycogen polymer. In Cryptococcus neoformans var. grubii serotype A (strain H99 / ATCC 208821 / CBS 10515 / FGSC 9487) (Filobasidiella neoformans var. grubii), this protein is 1,4-alpha-glucan-branching enzyme.